The sequence spans 401 residues: Lipid-A-disaccharide synthase (401 aa).

This sequence belongs to the LpxB family.

The enzyme catalyses a lipid X + a UDP-2-N,3-O-bis[(3R)-3-hydroxyacyl]-alpha-D-glucosamine = a lipid A disaccharide + UDP + H(+). Its pathway is bacterial outer membrane biogenesis; LPS lipid A biosynthesis. In terms of biological role, condensation of UDP-2,3-diacylglucosamine and 2,3-diacylglucosamine-1-phosphate to form lipid A disaccharide, a precursor of lipid A, a phosphorylated glycolipid that anchors the lipopolysaccharide to the outer membrane of the cell. The polypeptide is Lipid-A-disaccharide synthase (Ruegeria pomeroyi (strain ATCC 700808 / DSM 15171 / DSS-3) (Silicibacter pomeroyi)).